The sequence spans 236 residues: Small ribosomal subunit protein uS3 (236 aa).

A KH type-2 domain is found at 39-107 (IREVLEKQLK…EVHLNIVEVR (69 aa)). The segment at 214 to 236 (ASERRALEGGDSGGGRSRRDDRG) is disordered.

Belongs to the universal ribosomal protein uS3 family. As to quaternary structure, part of the 30S ribosomal subunit. Forms a tight complex with proteins S10 and S14.

In terms of biological role, binds the lower part of the 30S subunit head. Binds mRNA in the 70S ribosome, positioning it for translation. This is Small ribosomal subunit protein uS3 from Parvibaculum lavamentivorans (strain DS-1 / DSM 13023 / NCIMB 13966).